Consider the following 76-residue polypeptide: DNA-directed RNA polymerase subunit omega (76 aa).

Belongs to the RNA polymerase subunit omega family. The RNAP catalytic core consists of 2 alpha, 1 beta, 1 beta' and 1 omega subunit. When a sigma factor is associated with the core the holoenzyme is formed, which can initiate transcription.

It catalyses the reaction RNA(n) + a ribonucleoside 5'-triphosphate = RNA(n+1) + diphosphate. In terms of biological role, promotes RNA polymerase assembly. Latches the N- and C-terminal regions of the beta' subunit thereby facilitating its interaction with the beta and alpha subunits. This Aquifex aeolicus (strain VF5) protein is DNA-directed RNA polymerase subunit omega (rpoZ).